The primary structure comprises 392 residues: L-lactate dehydrogenase (392 aa).

The FMN hydroxy acid dehydrogenase domain occupies 1–380 (MIISASTDYR…GSDSLVTGSA (380 aa)). Tyr24 lines the substrate pocket. Residues Ser106 and Gln127 each contribute to the FMN site. Tyr129 contacts substrate. Residue Thr155 coordinates FMN. Arg164 contributes to the substrate binding site. An FMN-binding site is contributed by Lys251. His275 acts as the Proton acceptor in catalysis. Position 278 (Arg278) interacts with substrate. An FMN-binding site is contributed by 306 to 330 (DSGVRNGLDVVRMIAMGADTILLGR).

It belongs to the FMN-dependent alpha-hydroxy acid dehydrogenase family. Requires FMN as cofactor.

The protein localises to the cell inner membrane. It catalyses the reaction (S)-lactate + A = pyruvate + AH2. In terms of biological role, catalyzes the conversion of L-lactate to pyruvate. Is coupled to the respiratory chain. The polypeptide is L-lactate dehydrogenase (Chromohalobacter salexigens (strain ATCC BAA-138 / DSM 3043 / CIP 106854 / NCIMB 13768 / 1H11)).